A 458-amino-acid polypeptide reads, in one-letter code: uncharacterized protein (458 aa).

The region spanning 8 to 66 (PVEKNEFIDVVFEDLTHDGAGVAKVKGYPIFVKNGLPGEEAQIKIIKVKKNFAFGRLMK) is the TRAM domain. [4Fe-4S] cluster is bound by residues Cys-79, Cys-85, Cys-88, and Cys-166. The S-adenosyl-L-methionine site is built by Gln-290, Tyr-319, Glu-340, and Asp-388. The active-site Nucleophile is the Cys-415.

This sequence belongs to the class I-like SAM-binding methyltransferase superfamily. RNA M5U methyltransferase family.

This is an uncharacterized protein from Bacillus cereus (strain ATCC 14579 / DSM 31 / CCUG 7414 / JCM 2152 / NBRC 15305 / NCIMB 9373 / NCTC 2599 / NRRL B-3711).